We begin with the raw amino-acid sequence, 758 residues long: MADDGLLLNFSLGDNNIIQPETKLKGGTWRDRLSAKKIAKHHAKGPRTAGDEDSTPRAPRNPNRIEVPSSRPTKRQRTDGGDSGKQQSHTHPHSNQPRQFISSLFTKNPEPQKVEEVKEEGHVEDAKPTNAPLIDGLDTFTNLGLSPSLAAHLLTKLELKAPTAIQKASISQLLKEEGDAFIQAETGSGKTLAYLLPLVQRIMALSKPGAQTDAKGQPIVHRDSGLFAIVLAPTRELCKQISVVLENLLRCAHWIVAGTVIGGEKKKSEKARLRKGLNILVATPGRLADHLDNTQALDVSNVRWLVLDEGDRLMELGFEEEIQGIVKKLDARQRPSRIPGVPTRRTTILCSATLKMSVQKLGEISLKDAVHIKADPEDEDEKARRSKEEESAYRVPAQLKQSYAVVAAKLRLVTLTAFFKRTFMRKGSVMKAIIFVSCADSVDFHFEVFTRKQAKEDGDESSDTDKSEDKPPSSPHGTIAPATAFSNPSNPVTLFRLHGSLPQNVRTSTLGAFAKNKEASVLICTDVASRGLDLPNVDLVVEYDPAFSAEDHLHRIGRTARVGRDGRALIFLQPGCEENYVEVLKRGYRDGGKALTRADANDILKRGFGGNVESGNKDWETKATDWQCEIERWALENPEYLEMARRAFQSHIRAYATHIAAERSMFNIKELHLGHLAKAFALRDRPSKINVPGLRQGKEETKKDFKAERNSAAGKKRKAGGTDLADDIPSANNTATAAQKMRAKMKEHISGANEFNLA.

Disordered stretches follow at residues 26-99 (GGTW…QPRQ) and 111-130 (PQKVEEVKEEGHVEDAKPTN). Residues 35 to 45 (AKKIAKHHAKG) are compositionally biased toward basic residues. Residues 84 to 99 (GKQQSHTHPHSNQPRQ) are compositionally biased toward polar residues. Basic and acidic residues predominate over residues 111-127 (PQKVEEVKEEGHVEDAK). Positions 138–167 (DTFTNLGLSPSLAAHLLTKLELKAPTAIQK) match the Q motif motif. One can recognise a Helicase ATP-binding domain in the interval 171-372 (SQLLKEEGDA…EISLKDAVHI (202 aa)). 184-191 (AETGSGKT) contacts ATP. The DEAD box signature appears at 308–311 (DEGD). The region spanning 398-603 (QLKQSYAVVA…ALTRADANDI (206 aa)) is the Helicase C-terminal domain. 2 disordered regions span residues 455-483 (KEDGDESSDTDKSEDKPPSSPHGTIAPAT) and 691-758 (VPGL…FNLA). Positions 696 to 709 (QGKEETKKDFKAER) are enriched in basic and acidic residues.

It belongs to the DEAD box helicase family. DDX31/DBP7 subfamily.

The protein resides in the nucleus. It localises to the nucleolus. The enzyme catalyses ATP + H2O = ADP + phosphate + H(+). In terms of biological role, ATP-binding RNA helicase involved in the biogenesis of 60S ribosomal subunits and is required for the normal formation of 25S and 5.8S rRNAs. The protein is ATP-dependent RNA helicase dbp7 (dbp7) of Neosartorya fischeri (strain ATCC 1020 / DSM 3700 / CBS 544.65 / FGSC A1164 / JCM 1740 / NRRL 181 / WB 181) (Aspergillus fischerianus).